Reading from the N-terminus, the 497-residue chain is Glycerol kinase (497 aa).

ADP is bound at residue Thr-11. ATP-binding residues include Thr-11, Ser-12, and Ser-13. Thr-11 provides a ligand contact to sn-glycerol 3-phosphate. Arg-15 lines the ADP pocket. Arg-81, Glu-82, Tyr-133, and Asp-242 together coordinate sn-glycerol 3-phosphate. Residues Arg-81, Glu-82, Tyr-133, Asp-242, and Gln-243 each coordinate glycerol. Positions 264 and 307 each coordinate ADP. ATP is bound by residues Thr-264, Gly-307, Gln-311, and Gly-412. 2 residues coordinate ADP: Gly-412 and Asn-416.

The protein belongs to the FGGY kinase family.

It catalyses the reaction glycerol + ATP = sn-glycerol 3-phosphate + ADP + H(+). It participates in polyol metabolism; glycerol degradation via glycerol kinase pathway; sn-glycerol 3-phosphate from glycerol: step 1/1. Its activity is regulated as follows. Inhibited by fructose 1,6-bisphosphate (FBP). In terms of biological role, key enzyme in the regulation of glycerol uptake and metabolism. Catalyzes the phosphorylation of glycerol to yield sn-glycerol 3-phosphate. This is Glycerol kinase from Polaromonas sp. (strain JS666 / ATCC BAA-500).